The chain runs to 253 residues: Amino-acid-binding protein AabA (253 aa).

The first 23 residues, M1–C23, serve as a signal peptide directing secretion.

It belongs to the bacterial solute-binding protein 3 family.

The protein resides in the periplasm. The chain is Amino-acid-binding protein AabA (aabA) from Dichelobacter nodosus (Bacteroides nodosus).